Consider the following 102-residue polypeptide: uncharacterized protein (102 aa).

Positions 1 to 41 (MLFLDSYSLLIQFQRFKNWESPRRFSSSFPLLLFVFKPIFA) are cleaved as a signal peptide.

This is an uncharacterized protein from Saccharomyces cerevisiae (strain ATCC 204508 / S288c) (Baker's yeast).